We begin with the raw amino-acid sequence, 292 residues long: Homoserine kinase (292 aa).

ATP is bound at residue 84–94; sequence PLSRGLGSSSA.

Belongs to the GHMP kinase family. Homoserine kinase subfamily.

Its subcellular location is the cytoplasm. The enzyme catalyses L-homoserine + ATP = O-phospho-L-homoserine + ADP + H(+). It participates in amino-acid biosynthesis; L-threonine biosynthesis; L-threonine from L-aspartate: step 4/5. Functionally, catalyzes the ATP-dependent phosphorylation of L-homoserine to L-homoserine phosphate. The sequence is that of Homoserine kinase from Campylobacter jejuni subsp. doylei (strain ATCC BAA-1458 / RM4099 / 269.97).